The primary structure comprises 156 residues: Perlucin-like protein (156 aa).

An N-terminal signal peptide occupies residues 1 to 22 (MGKLTVVGILTLFIFYIVAASG). Cystine bridges form between cysteine 30–cysteine 41, cysteine 58–cysteine 156, and cysteine 131–cysteine 147. In terms of domain architecture, C-type lectin spans 37-156 (YKTNCYFFSP…CNTDQMGYIC (120 aa)).

As to expression, component of the organic matrix of calcified shell layers like nacre and prisms.

The protein localises to the secreted. The chain is Perlucin-like protein from Mytilus galloprovincialis (Mediterranean mussel).